Here is a 199-residue protein sequence, read N- to C-terminus: Probable GTP-binding protein EngB (199 aa).

In terms of domain architecture, EngB-type G spans 21–196 (TKPEYAFIGR…LTYIDEINKQ (176 aa)). Residues 29–36 (GRSNVGKS), 56–60 (GKTQL), 74–77 (DLPG), 141–144 (TKID), and 175–177 (TSS) contribute to the GTP site. Positions 36 and 58 each coordinate Mg(2+).

Belongs to the TRAFAC class TrmE-Era-EngA-EngB-Septin-like GTPase superfamily. EngB GTPase family. Requires Mg(2+) as cofactor.

Its function is as follows. Necessary for normal cell division and for the maintenance of normal septation. The polypeptide is Probable GTP-binding protein EngB (Cytophaga hutchinsonii (strain ATCC 33406 / DSM 1761 / CIP 103989 / NBRC 15051 / NCIMB 9469 / D465)).